We begin with the raw amino-acid sequence, 351 residues long: uncharacterized protein (351 aa).

The first 27 residues, 1–27, serve as a signal peptide directing secretion; that stretch reads MKNKKRVLIASSLSCAILLLSAATTQA. A disordered region spans residues 29–71; the sequence is SAHKDSQDQNKKEHVDKSQQKDKRNVTNKDKNSTVPDDIGKNG. Over residues 30 to 60 the composition is skewed to basic and acidic residues; the sequence is AHKDSQDQNKKEHVDKSQQKDKRNVTNKDKN.

Belongs to the aerolysin family.

This is an uncharacterized protein from Staphylococcus aureus (strain Mu50 / ATCC 700699).